Consider the following 639-residue polypeptide: Threonine--tRNA ligase (639 aa).

Residues Met1–Thr61 enclose the TGS domain. The segment at Asp239–Pro536 is catalytic. Zn(2+)-binding residues include Cys333, His384, and His513.

Belongs to the class-II aminoacyl-tRNA synthetase family. Homodimer. Zn(2+) is required as a cofactor.

The protein localises to the cytoplasm. It carries out the reaction tRNA(Thr) + L-threonine + ATP = L-threonyl-tRNA(Thr) + AMP + diphosphate + H(+). In terms of biological role, catalyzes the attachment of threonine to tRNA(Thr) in a two-step reaction: L-threonine is first activated by ATP to form Thr-AMP and then transferred to the acceptor end of tRNA(Thr). Also edits incorrectly charged L-seryl-tRNA(Thr). The polypeptide is Threonine--tRNA ligase (Rubrobacter xylanophilus (strain DSM 9941 / JCM 11954 / NBRC 16129 / PRD-1)).